Consider the following 511-residue polypeptide: Mesoderm induction early response protein 1 (511 aa).

Over residues 1-16 (MAEPSVESSSPGGSAT) the composition is skewed to low complexity. The interval 1–171 (MAEPSVESSS…EEESEEDEDY (171 aa)) is disordered. Position 10 is a phosphoserine (S10). Positions 17–36 (SEDHEFDPSADMLVHDFDDE) are enriched in basic and acidic residues. Over residues 37-46 (RTLEEEEMME) the composition is skewed to acidic residues. Basic and acidic residues predominate over residues 57–66 (DLAREGDMPI). A compositionally biased stretch (acidic residues) spans 83–104 (EEEEEEEEEEEGEDDEDADNDD). The span at 128-143 (QSSNDDPSQSVTSQDA) shows a compositional bias: polar residues. Position 140 is a phosphoserine (S140). Y154 is modified (phosphotyrosine). Phosphoserine occurs at positions 159 and 165. Positions 159 to 171 (SEIEEESEEDEDY) are enriched in acidic residues. Residues 179–277 (KEIMVGSMFQ…EALRRLRFNV (99 aa)) enclose the ELM2 domain. Residue K238 forms a Glycyl lysine isopeptide (Lys-Gly) (interchain with G-Cter in SUMO2) linkage. The region spanning 282-334 (EELSVWTEEECRNFEQGLKAYGKDFHLIQANKVRTRSVGECVAFYYMWKKSER) is the SANT domain. Residues 365–511 (ESESAASSRA…KFEEHENTND (147 aa)) are disordered. 3 positions are modified to phosphoserine: S366, S368, and S376. Residues 397–408 (SSRNQNGVSSNG) show a composition bias toward polar residues. Basic and acidic residues-rich tracts occupy residues 413 to 422 (LNKEEVKVEG) and 461 to 474 (ARNE…NERP). A Glycyl lysine isopeptide (Lys-Gly) (interchain with G-Cter in SUMO2) cross-link involves residue K419. A compositionally biased stretch (polar residues) spans 481-493 (NSSGKESPGSSEF). S482, S487, and S490 each carry phosphoserine. The span at 499-511 (SHGKFEEHENTND) shows a compositional bias: basic and acidic residues.

In terms of assembly, interacts with HDAC1. Part of a complex containing at least CDYL, MIER1, MIER2, HDAC1 and HDAC2. In terms of tissue distribution, ubiquitously expressed. Isoform 1 is only expressed in testis.

It is found in the nucleus. Functionally, transcriptional repressor regulating the expression of a number of genes including SP1 target genes. Probably functions through recruitment of HDAC1 a histone deacetylase involved in chromatin silencing. The protein is Mesoderm induction early response protein 1 (Mier1) of Mus musculus (Mouse).